Reading from the N-terminus, the 267-residue chain is NAD kinase (267 aa).

Residue D45 is the Proton acceptor of the active site. Residues 45 to 46, 123 to 124, R149, D151, A186, and N226 each bind NAD(+); these read DG and NE.

This sequence belongs to the NAD kinase family. A divalent metal cation serves as cofactor.

Its subcellular location is the cytoplasm. It catalyses the reaction NAD(+) + ATP = ADP + NADP(+) + H(+). Its function is as follows. Involved in the regulation of the intracellular balance of NAD and NADP, and is a key enzyme in the biosynthesis of NADP. Catalyzes specifically the phosphorylation on 2'-hydroxyl of the adenosine moiety of NAD to yield NADP. The sequence is that of NAD kinase from Shouchella clausii (strain KSM-K16) (Alkalihalobacillus clausii).